The chain runs to 434 residues: Enolase (434 aa).

The tract at residues 29-56 (SGHTGRAAVPSGASTGSREALEMRDGDK) is disordered. The span at 47 to 56 (EALEMRDGDK) shows a compositional bias: basic and acidic residues. Q163 is a (2R)-2-phosphoglycerate binding site. Residue E205 is the Proton donor of the active site. Mg(2+) is bound by residues D242, E285, and D312. 4 residues coordinate (2R)-2-phosphoglycerate: K337, R366, S367, and K388. K337 (proton acceptor) is an active-site residue.

The protein belongs to the enolase family. As to quaternary structure, homooctamer. The cofactor is Mg(2+).

It is found in the cytoplasm. The protein resides in the secreted. Its subcellular location is the cell surface. The enzyme catalyses (2R)-2-phosphoglycerate = phosphoenolpyruvate + H2O. It functions in the pathway carbohydrate degradation; glycolysis; pyruvate from D-glyceraldehyde 3-phosphate: step 4/5. Catalyzes the reversible conversion of 2-phosphoglycerate (2-PG) into phosphoenolpyruvate (PEP). It is essential for the degradation of carbohydrates via glycolysis. The protein is Enolase of Nitratidesulfovibrio vulgaris (strain DSM 19637 / Miyazaki F) (Desulfovibrio vulgaris).